Reading from the N-terminus, the 272-residue chain is HMP-PP phosphatase (272 aa).

Catalysis depends on Asp8, which acts as the Nucleophile. Mg(2+)-binding residues include Asp8, Asp10, and Asp212.

This sequence belongs to the HAD-like hydrolase superfamily. Cof family. The cofactor is Mg(2+).

The catalysed reaction is 4-amino-2-methyl-5-(diphosphooxymethyl)pyrimidine + H2O = 4-amino-2-methyl-5-(phosphooxymethyl)pyrimidine + phosphate + H(+). Catalyzes the hydrolysis of 4-amino-2-methyl-5-hydroxymethylpyrimidine pyrophosphate (HMP-PP) to 4-amino-2-methyl-5-hydroxymethylpyrimidine phosphate (HMP-P). In Escherichia coli O8 (strain IAI1), this protein is HMP-PP phosphatase.